The sequence spans 290 residues: Elongation factor Ts (290 aa).

The interval 82 to 85 is involved in Mg(2+) ion dislocation from EF-Tu; sequence TDFV.

It belongs to the EF-Ts family.

It localises to the cytoplasm. In terms of biological role, associates with the EF-Tu.GDP complex and induces the exchange of GDP to GTP. It remains bound to the aminoacyl-tRNA.EF-Tu.GTP complex up to the GTP hydrolysis stage on the ribosome. The protein is Elongation factor Ts of Thiobacillus denitrificans (strain ATCC 25259 / T1).